Here is a 347-residue protein sequence, read N- to C-terminus: Probable dual-specificity RNA methyltransferase RlmN (347 aa).

Glu-93 acts as the Proton acceptor in catalysis. One can recognise a Radical SAM core domain in the interval 100-323 (KAKRKTACVS…KKAGLNISTR (224 aa)). A disulfide bridge links Cys-107 with Cys-334. Cys-114, Cys-118, and Cys-121 together coordinate [4Fe-4S] cluster. S-adenosyl-L-methionine-binding positions include 160-161 (GE), Ser-192, 215-217 (SLT), and Asn-291. Cys-334 functions as the S-methylcysteine intermediate in the catalytic mechanism.

The protein belongs to the radical SAM superfamily. RlmN family. It depends on [4Fe-4S] cluster as a cofactor.

The protein localises to the cytoplasm. The enzyme catalyses adenosine(2503) in 23S rRNA + 2 reduced [2Fe-2S]-[ferredoxin] + 2 S-adenosyl-L-methionine = 2-methyladenosine(2503) in 23S rRNA + 5'-deoxyadenosine + L-methionine + 2 oxidized [2Fe-2S]-[ferredoxin] + S-adenosyl-L-homocysteine. It catalyses the reaction adenosine(37) in tRNA + 2 reduced [2Fe-2S]-[ferredoxin] + 2 S-adenosyl-L-methionine = 2-methyladenosine(37) in tRNA + 5'-deoxyadenosine + L-methionine + 2 oxidized [2Fe-2S]-[ferredoxin] + S-adenosyl-L-homocysteine. Specifically methylates position 2 of adenine 2503 in 23S rRNA and position 2 of adenine 37 in tRNAs. This is Probable dual-specificity RNA methyltransferase RlmN from Treponema denticola (strain ATCC 35405 / DSM 14222 / CIP 103919 / JCM 8153 / KCTC 15104).